We begin with the raw amino-acid sequence, 228 residues long: Cytochrome c oxidase subunit 2 (228 aa).

Topologically, residues 1–26 (MRTWSNFNLQNSASPLMEQIIFFHDH) are mitochondrial intermembrane. Residues 27–48 (TLIILIMITILVGYIMINLFFN) form a helical membrane-spanning segment. Residues 49–62 (KFINRFFLVGQMIE) lie on the Mitochondrial matrix side of the membrane. Residues 63 to 82 (LIWTVLPAITLIFIALPSLR) traverse the membrane as a helical segment. At 83-228 (LLYLLDELNN…FINWINNYSY (146 aa)) the chain is on the mitochondrial intermembrane side. Residues His-161, Cys-196, Glu-198, Cys-200, His-204, and Met-207 each coordinate Cu cation. Glu-198 contributes to the Mg(2+) binding site.

This sequence belongs to the cytochrome c oxidase subunit 2 family. Component of the cytochrome c oxidase (complex IV, CIV), a multisubunit enzyme composed of a catalytic core of 3 subunits and several supernumerary subunits. The complex exists as a monomer or a dimer and forms supercomplexes (SCs) in the inner mitochondrial membrane with ubiquinol-cytochrome c oxidoreductase (cytochrome b-c1 complex, complex III, CIII). Requires Cu cation as cofactor.

Its subcellular location is the mitochondrion inner membrane. It carries out the reaction 4 Fe(II)-[cytochrome c] + O2 + 8 H(+)(in) = 4 Fe(III)-[cytochrome c] + 2 H2O + 4 H(+)(out). Functionally, component of the cytochrome c oxidase, the last enzyme in the mitochondrial electron transport chain which drives oxidative phosphorylation. The respiratory chain contains 3 multisubunit complexes succinate dehydrogenase (complex II, CII), ubiquinol-cytochrome c oxidoreductase (cytochrome b-c1 complex, complex III, CIII) and cytochrome c oxidase (complex IV, CIV), that cooperate to transfer electrons derived from NADH and succinate to molecular oxygen, creating an electrochemical gradient over the inner membrane that drives transmembrane transport and the ATP synthase. Cytochrome c oxidase is the component of the respiratory chain that catalyzes the reduction of oxygen to water. Electrons originating from reduced cytochrome c in the intermembrane space (IMS) are transferred via the dinuclear copper A center (CU(A)) of subunit 2 and heme A of subunit 1 to the active site in subunit 1, a binuclear center (BNC) formed by heme A3 and copper B (CU(B)). The BNC reduces molecular oxygen to 2 water molecules using 4 electrons from cytochrome c in the IMS and 4 protons from the mitochondrial matrix. This is Cytochrome c oxidase subunit 2 (COII) from Galleria mellonella (Greater wax moth).